Reading from the N-terminus, the 872-residue chain is Cilia- and flagella-associated protein 58 (872 aa).

Coiled-coil stretches lie at residues 106–595 (VDSA…ADGE) and 642–839 (ESQY…QKNK).

Belongs to the CFAP58 family. As to quaternary structure, interacts with ODFP2.

Its subcellular location is the cell projection. The protein localises to the cilium. It localises to the flagellum. The protein resides in the cytoplasm. It is found in the cytoskeleton. Its subcellular location is the microtubule organizing center. The protein localises to the centrosome. Functionally, has an essential role in the assembly and organization of the sperm flagellar axoneme. Required for the elongation of the primary cilium and sperm flagellar midpiece via modulation of the Notch signaling pathway. The chain is Cilia- and flagella-associated protein 58 from Homo sapiens (Human).